An 865-amino-acid chain; its full sequence is TATA box-binding protein-associated factor RNA polymerase I subunit B (865 aa).

An RRN7-type zinc finger spans residues 1 to 33; it reads MHSAKNEKCNACGGYRFSVNDGFKYCDRCGALF. Positions 9, 12, 26, and 29 each coordinate Zn(2+). Residues 35–99 are B-reader; that stretch reads NFEELEEEEG…DFLQQQAIKG (65 aa). Positions 100-111 are B-linker; the sequence is EELELPHDATPD. Residues 112 to 348 are N-terminal cyclin fold; it reads YLYRLALRLF…SQPERMKQGE (237 aa). Positions 233 to 261 are disordered; it reads DEDGDQDAQGGQQLDDLTLETTQNPDESI. Residues 239 to 248 are compositionally biased toward low complexity; it reads DAQGGQQLDD. The span at 252-261 shows a compositional bias: polar residues; the sequence is ETTQNPDESI. The segment at 349 to 496 is C-terminal cyclin fold; it reads VVKPTIVDYA…LLTLRLTFQL (148 aa).

This sequence belongs to the RRN7/TAF1B family.

The protein resides in the nucleus. The protein localises to the nucleolus. Component of RNA polymerase I core factor complex that acts as a GTF2B/TFIIB-like factor and plays a key role in multiple steps during transcription initiation such as pre-initiation complex (PIC) assembly and postpolymerase recruitment events in polymerase I (Pol I) transcription. Binds rDNA promoters and plays a role in Pol I recruitment. In Caenorhabditis elegans, this protein is TATA box-binding protein-associated factor RNA polymerase I subunit B.